A 338-amino-acid polypeptide reads, in one-letter code: Sesquiterpene synthase 1 (338 aa).

Residues Asp-93, Asn-228, Ser-232, and Glu-236 each coordinate Mg(2+). Positions 93-97 (DNISD) match the DDXXD motif motif. Residues 228–236 (NDIFSYNVE) carry the NSE/DTE motif motif. (2E,6E)-farnesyl diphosphate is bound by residues Arg-316 and Tyr-317.

The protein belongs to the terpene synthase family. Mg(2+) is required as a cofactor.

The catalysed reaction is (2E,6E)-farnesyl diphosphate = alpha-copaene + diphosphate. It catalyses the reaction (2E,6E)-farnesyl diphosphate = beta-copaene + diphosphate. The enzyme catalyses (2E,6E)-farnesyl diphosphate = alpha-muurolene + diphosphate. It carries out the reaction (2E,6E)-farnesyl diphosphate = gamma-muurolene + diphosphate. The catalysed reaction is (2E,6E)-farnesyl diphosphate = delta-cadinene + diphosphate. Its function is as follows. Terpene cyclase that catalyzes the cyclization of farnesyl diphosphate (FPP) to various sesquiterpenes, including alpha-copaene, beta-copaene, beta-elemene, alpha-muurolene, gamma-muurolene and delta-cadinene. The protein is Sesquiterpene synthase 1 of Postia placenta (strain ATCC 44394 / Madison 698-R) (Brown rot fungus).